Here is a 491-residue protein sequence, read N- to C-terminus: Protein OrfX3 (491 aa).

It belongs to the TULIP P47 family. As to quaternary structure, heterodimer of OrfX1 and OrfX3; crystallizes as a dimer of heterodimers.

Its function is as follows. Expression of the ptox operon (ntnh-orfX1-orfX2-orfX3-pmp1) in B.thuringiensis kills Anopheles but not Aedes mosquito 3rd instar larvae. The ntnh-pmp1 construct is about half as toxic. In Paraclostridium bifermentans (Clostridium bifermentans), this protein is Protein OrfX3.